Consider the following 193-residue polypeptide: Oligoribonuclease (193 aa).

Residues 14–177 (LIWIDLEMTG…SDIYDSIAEL (164 aa)) form the Exonuclease domain. Residue Tyr135 is part of the active site.

It belongs to the oligoribonuclease family.

Its subcellular location is the cytoplasm. 3'-to-5' exoribonuclease specific for small oligoribonucleotides. In Xylella fastidiosa (strain Temecula1 / ATCC 700964), this protein is Oligoribonuclease.